A 485-amino-acid polypeptide reads, in one-letter code: Glutamyl-tRNA(Gln) amidotransferase subunit A (485 aa).

Active-site charge relay system residues include Lys-74 and Ser-149. Residue Ser-173 is the Acyl-ester intermediate of the active site.

This sequence belongs to the amidase family. GatA subfamily. As to quaternary structure, heterotrimer of A, B and C subunits.

The catalysed reaction is L-glutamyl-tRNA(Gln) + L-glutamine + ATP + H2O = L-glutaminyl-tRNA(Gln) + L-glutamate + ADP + phosphate + H(+). Its function is as follows. Allows the formation of correctly charged Gln-tRNA(Gln) through the transamidation of misacylated Glu-tRNA(Gln) in organisms which lack glutaminyl-tRNA synthetase. The reaction takes place in the presence of glutamine and ATP through an activated gamma-phospho-Glu-tRNA(Gln). In Synechococcus sp. (strain RCC307), this protein is Glutamyl-tRNA(Gln) amidotransferase subunit A.